A 371-amino-acid polypeptide reads, in one-letter code: Bifunctional enzyme IspD/IspF (371 aa).

The 2-C-methyl-D-erythritol 4-phosphate cytidylyltransferase stretch occupies residues 1–210; sequence MSEMSLIMLA…LNLPTPSFEI (210 aa). The tract at residues 211–371 is 2-C-methyl-D-erythritol 2,4-cyclodiphosphate synthase; it reads FTGNGFDVHE…NLKYFDWTRL (161 aa). A divalent metal cation is bound by residues Asp217 and His219. 4-CDP-2-C-methyl-D-erythritol 2-phosphate-binding positions include 217–219 and 243–244; these read DVH and HS. Residue His251 coordinates a divalent metal cation. 4-CDP-2-C-methyl-D-erythritol 2-phosphate-binding positions include 265-267, 270-274, 341-344, Phe348, and Arg351; these read DIG, YPDTD, and TTTE.

The protein in the N-terminal section; belongs to the IspD/TarI cytidylyltransferase family. IspD subfamily. This sequence in the C-terminal section; belongs to the IspF family. A divalent metal cation serves as cofactor.

The enzyme catalyses 2-C-methyl-D-erythritol 4-phosphate + CTP + H(+) = 4-CDP-2-C-methyl-D-erythritol + diphosphate. It catalyses the reaction 4-CDP-2-C-methyl-D-erythritol 2-phosphate = 2-C-methyl-D-erythritol 2,4-cyclic diphosphate + CMP. The protein operates within isoprenoid biosynthesis; isopentenyl diphosphate biosynthesis via DXP pathway; isopentenyl diphosphate from 1-deoxy-D-xylulose 5-phosphate: step 2/6. It participates in isoprenoid biosynthesis; isopentenyl diphosphate biosynthesis via DXP pathway; isopentenyl diphosphate from 1-deoxy-D-xylulose 5-phosphate: step 4/6. Its function is as follows. Bifunctional enzyme that catalyzes the formation of 4-diphosphocytidyl-2-C-methyl-D-erythritol from CTP and 2-C-methyl-D-erythritol 4-phosphate (MEP) (IspD), and catalyzes the conversion of 4-diphosphocytidyl-2-C-methyl-D-erythritol 2-phosphate (CDP-ME2P) to 2-C-methyl-D-erythritol 2,4-cyclodiphosphate (ME-CPP) with a corresponding release of cytidine 5-monophosphate (CMP) (IspF). This Campylobacter jejuni (strain RM1221) protein is Bifunctional enzyme IspD/IspF.